An 82-amino-acid polypeptide reads, in one-letter code: Small ribosomal subunit protein bS18 (82 aa).

The interval 1–25 is disordered; sequence MADTSSSQARRPFHRRRKTCPFSGA.

It belongs to the bacterial ribosomal protein bS18 family. As to quaternary structure, part of the 30S ribosomal subunit. Forms a tight heterodimer with protein bS6.

Its function is as follows. Binds as a heterodimer with protein bS6 to the central domain of the 16S rRNA, where it helps stabilize the platform of the 30S subunit. This is Small ribosomal subunit protein bS18 from Agrobacterium fabrum (strain C58 / ATCC 33970) (Agrobacterium tumefaciens (strain C58)).